A 181-amino-acid chain; its full sequence is HGPRTase-like protein 2 (181 aa).

This sequence belongs to the purine/pyrimidine phosphoribosyltransferase family. Archaeal HPRT subfamily.

Its function is as follows. May catalyze a purine salvage reaction, the substrate is unknown. This chain is HGPRTase-like protein 2, found in Haloferax volcanii (strain ATCC 29605 / DSM 3757 / JCM 8879 / NBRC 14742 / NCIMB 2012 / VKM B-1768 / DS2) (Halobacterium volcanii).